The primary structure comprises 369 residues: Peptide chain release factor 2 (369 aa).

The residue at position 247 (Q247) is an N5-methylglutamine.

This sequence belongs to the prokaryotic/mitochondrial release factor family. Methylated by PrmC. Methylation increases the termination efficiency of RF2.

It is found in the cytoplasm. Functionally, peptide chain release factor 2 directs the termination of translation in response to the peptide chain termination codons UGA and UAA. This is Peptide chain release factor 2 from Phenylobacterium zucineum (strain HLK1).